Reading from the N-terminus, the 273-residue chain is Undecaprenyl-diphosphatase (273 aa).

7 helical membrane-spanning segments follow: residues 48–68, 89–109, 116–136, 152–172, 193–213, 222–242, and 252–272; these read AANT…VVVF, LTLL…VLFE, LFST…MIVA, ITYK…WPGF, ADFT…LSLL, ADIP…LLAI, and IRLV…YFLY.

The protein belongs to the UppP family.

The protein localises to the cell membrane. It catalyses the reaction di-trans,octa-cis-undecaprenyl diphosphate + H2O = di-trans,octa-cis-undecaprenyl phosphate + phosphate + H(+). Its function is as follows. Catalyzes the dephosphorylation of undecaprenyl diphosphate (UPP). Confers resistance to bacitracin. This is Undecaprenyl-diphosphatase from Geobacillus thermodenitrificans (strain NG80-2).